Here is a 187-residue protein sequence, read N- to C-terminus: UPF0669 protein C6orf120 homolog (187 aa).

An N-terminal signal peptide occupies residues 1–23 (MVEYWKRNFFMVLVLQAFYLANC). Asparagine 47 is a glycosylation site (N-linked (GlcNAc...) asparagine).

Belongs to the UPF0669 family.

The protein localises to the secreted. This Xenopus tropicalis (Western clawed frog) protein is UPF0669 protein C6orf120 homolog.